Here is a 1408-residue protein sequence, read N- to C-terminus: DNA-directed RNA polymerase subunit beta' (1408 aa).

4 residues coordinate Zn(2+): C70, C72, C85, and C88. D458, D460, and D462 together coordinate Mg(2+). 4 residues coordinate Zn(2+): C813, C887, C894, and C897. Positions 1387–1408 (AELEAATATAPADAGGDSPATE) are disordered. Residues 1389 to 1408 (LEAATATAPADAGGDSPATE) are compositionally biased toward low complexity.

Belongs to the RNA polymerase beta' chain family. As to quaternary structure, the RNAP catalytic core consists of 2 alpha, 1 beta, 1 beta' and 1 omega subunit. When a sigma factor is associated with the core the holoenzyme is formed, which can initiate transcription. Requires Mg(2+) as cofactor. Zn(2+) is required as a cofactor.

It catalyses the reaction RNA(n) + a ribonucleoside 5'-triphosphate = RNA(n+1) + diphosphate. DNA-dependent RNA polymerase catalyzes the transcription of DNA into RNA using the four ribonucleoside triphosphates as substrates. The protein is DNA-directed RNA polymerase subunit beta' of Polaromonas sp. (strain JS666 / ATCC BAA-500).